Reading from the N-terminus, the 618-residue chain is Proline--tRNA ligase (618 aa).

It belongs to the class-II aminoacyl-tRNA synthetase family. ProS type 1 subfamily. Homodimer.

The protein resides in the cytoplasm. It catalyses the reaction tRNA(Pro) + L-proline + ATP = L-prolyl-tRNA(Pro) + AMP + diphosphate. In terms of biological role, catalyzes the attachment of proline to tRNA(Pro) in a two-step reaction: proline is first activated by ATP to form Pro-AMP and then transferred to the acceptor end of tRNA(Pro). As ProRS can inadvertently accommodate and process non-cognate amino acids such as alanine and cysteine, to avoid such errors it has two additional distinct editing activities against alanine. One activity is designated as 'pretransfer' editing and involves the tRNA(Pro)-independent hydrolysis of activated Ala-AMP. The other activity is designated 'posttransfer' editing and involves deacylation of mischarged Ala-tRNA(Pro). The misacylated Cys-tRNA(Pro) is not edited by ProRS. This is Proline--tRNA ligase from Streptococcus equi subsp. zooepidemicus (strain H70).